The following is a 232-amino-acid chain: Phosphate-specific transport system accessory protein PhoU homolog 1 (232 aa).

Belongs to the PhoU family. Homodimer.

It is found in the cytoplasm. Its function is as follows. Plays a role in the regulation of phosphate uptake. This is Phosphate-specific transport system accessory protein PhoU homolog 1 (phoU1) from Thermotoga maritima (strain ATCC 43589 / DSM 3109 / JCM 10099 / NBRC 100826 / MSB8).